Consider the following 407-residue polypeptide: Phenazine 1,6-dicarboxylic acid hydroxylase PhzS (407 aa).

The FAD site is built by G17, V134, and D313.

FAD serves as cofactor.

It catalyses the reaction phenazine-1,6-dicarboxylate + NADH + O2 + 2 H(+) = 6-hydroxyphenazine-1-carboxylate + CO2 + NAD(+) + H2O. It carries out the reaction 6-hydroxyphenazine-1-carboxylate + NADH + O2 + 2 H(+) = 1,6-dihydroxyphenazine + CO2 + NAD(+) + H2O. The enzyme catalyses phenazine-1-carboxylate + NADH + O2 + 2 H(+) = 1-hydroxyphenazine + CO2 + NAD(+) + H2O. Functionally, involved in the biosynthesis of phenazine natural products including myxin, an N(5),N(10)-dioxide phenazine antiobiotic, which has antimicrobial activity. Catalyzes the decarboxylative hydroxylations of phenazine 1,6-dicarboxylic acid (PDC) to produce 1,6-dihydroxyphenazine (DHP). Low activity with phenazine 1-carboxylic acid (PCA) to produce 1-hydroxyphenazine. This chain is Phenazine 1,6-dicarboxylic acid hydroxylase PhzS, found in Lysobacter antibioticus.